The primary structure comprises 288 residues: Polyisoprenoid diphosphate/phosphate phosphohydrolase PLPP6 (288 aa).

The disordered stretch occupies residues 1 to 82 (MPSPKARSGS…STGGGGQQLP (82 aa)). Residues 1–127 (MPSPKARSGS…EDSSWGSVRP (127 aa)) lie on the Cytoplasmic side of the membrane. A helical membrane pass occupies residues 128–148 (LMKLIEVSGHGIPWLAGAAYC). Residues 149–161 (LYKSDSPAGQEVM) are Lumenal-facing. A helical transmembrane segment spans residues 162 to 182 (LNLLMALVLDVVLVGVLKAVV). A phosphatase sequence motif I region spans residues 179–187 (KAVVRRRRP). Over 183–223 (RRRRPAHNRMDMFATFSVDSYSFPSGHATRAAMCARFLLNH) the chain is Cytoplasmic. The phosphatase sequence motif II stretch occupies residues 206 to 209 (PSGH). Residue His209 is the Proton donors of the active site. A helical transmembrane segment spans residues 224 to 244 (LVLAAPLRVLVLLWATIVGFS). Positions 244–255 (SRVLLGRHNVTD) are phosphatase sequence motif III. The Lumenal portion of the chain corresponds to 245 to 255 (RVLLGRHNVTD). His251 serves as the catalytic Nucleophile. The chain crosses the membrane as a helical span at residues 256–276 (VAFGFFMGYWQYNLVEMLWLS). Over 277–288 (PVMLQSAIGQLH) the chain is Cytoplasmic.

This sequence belongs to the PA-phosphatase related phosphoesterase family.

The protein resides in the endoplasmic reticulum membrane. Its subcellular location is the nucleus envelope. It localises to the nucleus inner membrane. The enzyme catalyses presqualene diphosphate + H2O = presqualene phosphate + phosphate + H(+). It catalyses the reaction presqualene phosphate + H2O = presqualene alcohol + phosphate. It carries out the reaction (2E,6E)-farnesyl diphosphate + H2O = (2E,6E)-farnesyl phosphate + phosphate + H(+). The catalysed reaction is (2E,6E)-farnesyl phosphate + H2O = (2E,6E)-farnesol + phosphate. The enzyme catalyses (2E,6E,10E)-geranylgeranyl diphosphate + H2O = (2E,6E,10E)-geranylgeranyl phosphate + phosphate + H(+). It catalyses the reaction (2E,6E,10E)-geranylgeranyl phosphate + H2O = (2E,6E,10E)-geranylgeraniol + phosphate. It carries out the reaction (2E)-geranyl diphosphate + H2O = (2E)-geranyl phosphate + phosphate + H(+). The catalysed reaction is (2E)-geranyl phosphate + H2O = (2E)-geraniol + phosphate. The enzyme catalyses 1,2-dihexadecanoyl-sn-glycero-3-phosphate + H2O = 1,2-dihexadecanoyl-sn-glycerol + phosphate. In terms of biological role, magnesium-independent polyisoprenoid diphosphatase that catalyzes the sequential dephosphorylation of presqualene, farnesyl, geranyl and geranylgeranyl diphosphates. May regulate the biosynthesis of cholesterol and related sterols by dephosphorylating presqualene and farnesyl diphosphate, two key intermediates in this biosynthetic pathway. May also play a role in protein prenylation by acting on farnesyl diphosphate and its derivative geranylgeranyl diphosphate, two precursors for the addition of isoprenoid anchors to membrane proteins. Has a lower activity towards phosphatidic acid (PA), but through phosphatidic acid dephosphorylation may participate in the biosynthesis of phospholipids and triacylglycerols. May also act on ceramide-1-P, lysophosphatidic acid (LPA) and sphing-4-enine 1-phosphate/sphingosine-1-phosphate. This chain is Polyisoprenoid diphosphate/phosphate phosphohydrolase PLPP6 (plpp6), found in Danio rerio (Zebrafish).